The sequence spans 313 residues: Short-chain dehydrogenase/reductase family 9C member 7 (313 aa).

29–53 contacts NADP(+); the sequence is FITGCDSGFGNLLAKQLVDRGMQVL. Ser-160 is a binding site for substrate. Catalysis depends on Tyr-172, which acts as the Proton acceptor. Phosphoserine is present on Ser-185.

This sequence belongs to the short-chain dehydrogenases/reductases (SDR) family. In terms of tissue distribution, expressed in the skin. Expressed in granular and cornified layers of the epidermis (at protein level). Highly expressed in liver.

Its subcellular location is the cytoplasm. The enzyme catalyses a N-[omega-(9R,10R)-epoxy-(13R)-hydroxy-(11E)-octadecenoyloxy]acyl-beta-D-glucosyl-(1&lt;-&gt;1)-sphing-4E-enine + NAD(+) = a N-[omega-(9R,10R)-epoxy-13-oxo-(11E)-octadecenoyloxy]acyl-beta-D-glucosyl-(1&lt;-&gt;1)-sphing-4E-enine + NADH + H(+). It carries out the reaction a N-[omega-(9R,10R)-epoxy-(13R)-hydroxy-(11E)-octadecenoyloxy]-acylsphing-4E-enine + NAD(+) = a N-[omega-(9R,10R)-epoxy-13-oxo-(11E)-octadecenoyloxy]-acylsphing-4E-enine + NADH + H(+). Its function is as follows. Plays a crucial role in the formation of the epidermal permeability barrier. Catalyzes the NAD+-dependent dehydrogenation of the linoleate 9,10-trans-epoxy-11E-13-alcohol esterified in omega-O-acylceramides (such as in N-[omega-(9R,10R)-epoxy-(13R)-hydroxy-(11E)-octadecenoyloxy]-acylsphing-4E-enine) to the corresponding 13-ketone, the reactive moiety required for binding of epidermal ceramides to proteins. Displays weak conversion of all-trans-retinal to all-trans-retinol in the presence of NADH. Has apparently no steroid dehydrogenase activity. The polypeptide is Short-chain dehydrogenase/reductase family 9C member 7 (SDR9C7) (Homo sapiens (Human)).